A 210-amino-acid chain; its full sequence is Cell division protein SepF (210 aa).

2 stretches are compositionally biased toward low complexity: residues 36 to 47 (QQQQTPAAVPTQ) and 59 to 69 (RASATTATTAS). 2 disordered regions span residues 36–69 (QQQQ…TTAS) and 182–210 (NEMS…QMIQ).

This sequence belongs to the SepF family. Homodimer. Interacts with FtsZ.

It localises to the cytoplasm. In terms of biological role, cell division protein that is part of the divisome complex and is recruited early to the Z-ring. Probably stimulates Z-ring formation, perhaps through the cross-linking of FtsZ protofilaments. Its function overlaps with FtsA. In Trichodesmium erythraeum (strain IMS101), this protein is Cell division protein SepF.